We begin with the raw amino-acid sequence, 236 residues long: uncharacterized protein (236 aa).

This sequence to M.tuberculosis Rv2557.

This is an uncharacterized protein from Mycobacterium tuberculosis (strain CDC 1551 / Oshkosh).